Consider the following 558-residue polypeptide: Solute carrier family 22 member 6-A (558 aa).

Residues 1–15 lie on the Cytoplasmic side of the membrane; sequence MSFAELLERTGGMGR. Residues 16-36 traverse the membrane as a helical segment; the sequence is FQITQVALMCFPILLMASHNL. At 37 to 140 the chain is on the extracellular side; that stretch reads LQNFSAAIPD…LVCGHKNRRQ (104 aa). A helical transmembrane segment spans residues 141–161; it reads LAQSVYMGGVLVGAIILGGLS. Topologically, residues 162-167 are cytoplasmic; sequence DRYGRR. The chain crosses the membrane as a helical span at residues 168–188; that stretch reads ALLIWSYFQMAVSGLCSAFSP. Over 189 to 197 the chain is Extracellular; sequence NYLSYCIFR. Residues 198 to 218 traverse the membrane as a helical segment; it reads FLTGMALSGIGLNTTALIVEW. Residues 219–225 are Cytoplasmic-facing; it reads VPTRVRT. Residues 226 to 246 form a helical membrane-spanning segment; the sequence is ITGTLAGFSYTVGQLLLAGLA. Residues 247–253 are Extracellular-facing; it reads YAMRDWR. A helical membrane pass occupies residues 254–274; the sequence is WLQLCVSLPFFIFFLYSWWFP. Residues 275–342 lie on the Cytoplasmic side of the membrane; that stretch reads ESARWLVLSG…DLIRTSTIRR (68 aa). The helical transmembrane segment at 343-363 threads the bilayer; the sequence is ISCALSLVWFSTSFAYYGLAM. Topologically, residues 364-369 are extracellular; the sequence is DLQNFN. The helical transmembrane segment at 370–390 threads the bilayer; that stretch reads VSIYLIQVIFGAVDFPAKIFS. The Cytoplasmic portion of the chain corresponds to 391-400; it reads TTAMIYVGRK. Residues 401–421 traverse the membrane as a helical segment; the sequence is FTQLMSLILGGVVILANSFVP. The Extracellular portion of the chain corresponds to 422–428; it reads HEMQTVR. The helical transmembrane segment at 429-449 threads the bilayer; the sequence is TGMAVFGKGCLAASFSCVFLY. Topologically, residues 450-462 are cytoplasmic; sequence TTELYPTVIRQSG. Residues 463–483 form a helical membrane-spanning segment; it reads LGLCSTMARIGGIVAPLVKIL. The Extracellular segment spans residues 484-488; sequence GEYYP. The chain crosses the membrane as a helical span at residues 489 to 509; sequence FLPLVIYGGAPIISGLCVFFL. Residues 510 to 558 are Cytoplasmic-facing; the sequence is PETVNKPLPDTIEEVEKRIKAPKKENEMNEIVSLKKKEGMKENPVNDVL. The segment covering 539–550 has biased composition (basic and acidic residues); sequence EIVSLKKKEGMK. Positions 539-558 are disordered; it reads EIVSLKKKEGMKENPVNDVL.

This sequence belongs to the major facilitator (TC 2.A.1) superfamily. Organic cation transporter (TC 2.A.1.19) family. In terms of processing, glycosylated. Glycosylation is necessary for proper targeting of the transporter to the plasma membrane.

The protein resides in the cell membrane. It is found in the basolateral cell membrane. Its subcellular location is the basal cell membrane. In terms of biological role, involved in the renal elimination of endogenous and exogenous organic anions. Mediates the sodium-independent uptake of p-aminohippurate (PAH), 2,3-dimercapto-1-propanesulfonic acid (DMPS), cidofovir, adefovir, 9-(2-phosphonylmethoxyethyl) guanine (PMEG), 9-(2-phosphonylmethoxyethyl) diaminopurine (PMEDAP), ochratoxin (OTA), acyclovir (ACV), 3'-azido-3-'deoxythymidine (AZT), cimetidine (CMD), 2,4-dichloro-phenoxyacetate (2,4-D), hippurate (HA), indoleacetate (IA), indoxyl sulfate (IS) and 3-carboxy-4-methyl-5-propyl-2-furanpropionate (CMPF) and edaravone sulfate. PAH uptake is inhibited by p-chloromercuribenzenesulphonate (PCMBS), diethyl pyrocarbonate (DEPC), indomethacin, sulindac, diclofenac, carprofen, okadaic acid, benzothiazolylcysteine (BTC), S-chlorotrifluoroethylcysteine (CTFC), cysteine S-conjugates S-dichlorovinylcysteine (DCVC), furosemide, steviol, phorbol 12-myristate 13-acetate (PMA), calcium ionophore A23187, benzylpenicillin, bumetamide, losartan, probenecid, phenol red, urate, glutarate and alpha-ketoglutarate. The sequence is that of Solute carrier family 22 member 6-A (slc22a6-a) from Xenopus laevis (African clawed frog).